Here is a 297-residue protein sequence, read N- to C-terminus: Transmembrane protein 178A (297 aa).

Positions Met1 to Ala25 are cleaved as a signal peptide. Topologically, residues Ile26–Gly179 are extracellular. The segment covering Glu41–Asn57 has biased composition (basic and acidic residues). Residues Glu41 to Arg84 form a disordered region. The segment covering Arg68–Pro79 has biased composition (low complexity). Asn158 is a glycosylation site (N-linked (GlcNAc...) asparagine). The helical transmembrane segment at Phe180 to Phe200 threads the bilayer. The Cytoplasmic portion of the chain corresponds to Trp201–His208. Residues Val209 to Ala229 traverse the membrane as a helical segment. At Ala230–Ser257 the chain is on the extracellular side. A helical membrane pass occupies residues Ile258–Tyr278. The Cytoplasmic portion of the chain corresponds to Pro279–Val297.

It belongs to the TMEM178 family. Interacts with STIM1.

It is found in the endoplasmic reticulum membrane. In terms of biological role, acts as a negative regulator of osteoclast differentiation in basal and inflammatory conditions by regulating TNFSF11-induced Ca (2+) fluxes, thereby controlling the induction of NFATC1. The sequence is that of Transmembrane protein 178A (TMEM178A) from Homo sapiens (Human).